The primary structure comprises 503 residues: MEEHGVTQTEHMATIEAHAVAQQVQQVHVATYTEHSMLSADEDSPSSPEDTSYDDSDILNSTAADEVTAHLAAAGPVGMAAAAAVATGKKRKRPHVFESNPSIRKRQQTRLLRKLRATLDEYTTRVGQQAIVLCISPSKPNPVFKVFGAAPLENVVRKYKSMILEDLESALAEHAPAPQEVNSELPPLTIDGIPVSVDKMTQAQLRAFIPEMLKYSTGRGKPGWGKESCKPIWWPEDIPWANVRSDVRTEEQKQRVSWTQALRTIVKNCYKQHGREDLLYAFEDQQTQTQATATHSIAHLVPSQTVVQTFSNPDGTVSLIQVGTGATVATLADASELPTTVTVAQVNYSAVADGEVEQNWATLQGGEMTIQTTQASEATQAVASLAEAAVAASQEMQQGATVTMALNSEAAAHAVATLAEATLQGGGQIVLSGETAAAVGALTGVQDANGLVQIPVSMYQTVVTSLAQGNGPVQVAMAPVTTRISDSAVTMDGQAVEVVTLEQ.

Positions 1–78 (MEEHGVTQTE…AHLAAAGPVG (78 aa)) are dimerization. The segment at 36-57 (SMLSADEDSPSSPEDTSYDDSD) is disordered. 5 positions are modified to phosphoserine; by CK2: S39, S44, S46, S47, and S52. A Nuclear localization signal motif is present at residues 88–116 (GKKRKRPHVFESNPSIRKRQQTRLLRKLR). The DNA-binding element occupies 109 to 305 (TRLLRKLRAT…SIAHLVPSQT (197 aa)). K139 is covalently cross-linked (Glycyl lysine isopeptide (Lys-Gly) (interchain with G-Cter in SUMO2)). Residues 301 to 476 (VPSQTVVQTF…AQGNGPVQVA (176 aa)) form a required for transcriptional activation region.

It belongs to the NRF1/Ewg family. In terms of assembly, homodimer. Binds DNA as a dimer. Interacts with PPRC1. Post-translationally, phosphorylation enhances DNA binding. As to expression, ubiquitously expressed with strongest expression in skeletal muscle.

The protein resides in the nucleus. In terms of biological role, transcription factor that activates the expression of the EIF2S1 (EIF2-alpha) gene. Links the transcriptional modulation of key metabolic genes to cellular growth and development. Implicated in the control of nuclear genes required for respiration, heme biosynthesis, and mitochondrial DNA transcription and replication. This is Nuclear respiratory factor 1 (NRF1) from Homo sapiens (Human).